We begin with the raw amino-acid sequence, 188 residues long: dCTP deaminase (188 aa).

Residues 111–116 (KSTYAR), 135–137 (TLE), Gln156, Tyr170, and Gln180 contribute to the dCTP site. Glu137 acts as the Proton donor/acceptor in catalysis.

Belongs to the dCTP deaminase family. In terms of assembly, homotrimer.

The enzyme catalyses dCTP + H2O + H(+) = dUTP + NH4(+). It participates in pyrimidine metabolism; dUMP biosynthesis; dUMP from dCTP (dUTP route): step 1/2. In terms of biological role, catalyzes the deamination of dCTP to dUTP. This is dCTP deaminase from Thioalkalivibrio sulfidiphilus (strain HL-EbGR7).